The primary structure comprises 98 residues: YTKMKTATNIYIFNLALADALATSTLPFQSVNYLMGTWPFGTILCKIVISIDYYNMFTSIFTLCTMSVDRYIAVCHPVKALDFRTPRNAKTVNVCNWI.

Over 1-9 the chain is Cytoplasmic; that stretch reads YTKMKTATN. The chain crosses the membrane as a helical span at residues 10–34; it reads IYIFNLALADALATSTLPFQSVNYL. Over 35-45 the chain is Extracellular; the sequence is MGTWPFGTILC. The helical transmembrane segment at 46–68 threads the bilayer; that stretch reads KIVISIDYYNMFTSIFTLCTMSV. Topologically, residues 69–88 are cytoplasmic; it reads DRYIAVCHPVKALDFRTPRN. Tyrosine 71 bears the Phosphotyrosine mark. A helical transmembrane segment spans residues 89–98; sequence AKTVNVCNWI.

This sequence belongs to the G-protein coupled receptor 1 family. Forms homooligomers and heterooligomers with other GPCRs, such as OPRD1, OPRK1, OPRL1, NPFFR2, ADRA2A, SSTR2, CNR1 and CCR5 (probably in dimeric forms). Interacts with heterotrimeric G proteins; interaction with a heterotrimeric complex containing GNAI1, GNB1 and GNG2 stabilizes the active conformation of the receptor and increases its affinity for endomorphin-2, the synthetic opioid peptide DAMGO and for morphinan agonists. Interacts with PPL; the interaction disrupts agonist-mediated G-protein activation. Interacts (via C-terminus) with DNAJB4 (via C-terminus). Interacts with calmodulin; the interaction inhibits the constitutive activity of OPRM1; it abolishes basal and attenuates agonist-stimulated G-protein coupling. Interacts with FLNA, PLD2, RANBP9 and WLS and GPM6A. Interacts with RTP4. Interacts with SYP and GNAS. Interacts with RGS9, RGS17, RGS20, RGS4, PPP1R9B and HINT1. Post-translationally, phosphorylated. Differentially phosphorylated in basal and agonist-induced conditions. Agonist-mediated phosphorylation modulates receptor internalization. Phosphorylated by GRK2 in a agonist-dependent manner. Phosphorylated on tyrosine residues; the phosphorylation is involved in agonist-induced G-protein-independent receptor down-regulation. Phosphorylated. Differentially phosphorylated in basal and agonist-induced conditions. Agonist-mediated phosphorylation modulates receptor internalization. Phosphorylated by GRK2 in a agonist-dependent manner. Phosphorylated on tyrosine residues; the phosphorylation is involved in agonist-induced G-protein-independent receptor down-regulation. In terms of processing, ubiquitinated. A basal ubiquitination seems not to be related to degradation. Ubiquitination is increased upon formation of OPRM1:OPRD1 oligomers leading to proteasomal degradation; the ubiquitination is diminished by RTP4.

Its subcellular location is the cell membrane. It is found in the cell projection. The protein resides in the axon. The protein localises to the perikaryon. It localises to the dendrite. Its subcellular location is the endosome. Receptor for endogenous opioids such as beta-endorphin and endomorphin. Receptor for natural and synthetic opioids including morphine, heroin, DAMGO, fentanyl, etorphine, buprenorphin and methadone. Also activated by enkephalin peptides, such as Met-enkephalin or Met-enkephalin-Arg-Phe, with higher affinity for Met-enkephalin-Arg-Phe. Agonist binding to the receptor induces coupling to an inactive GDP-bound heterotrimeric G-protein complex and subsequent exchange of GDP for GTP in the G-protein alpha subunit leading to dissociation of the G-protein complex with the free GTP-bound G-protein alpha and the G-protein beta-gamma dimer activating downstream cellular effectors. The agonist- and cell type-specific activity is predominantly coupled to pertussis toxin-sensitive G(i) and G(o) G alpha proteins, GNAI1, GNAI2, GNAI3 and GNAO1, and to a lesser extent to pertussis toxin-insensitive G alpha proteins GNAZ and GNA15. They mediate an array of downstream cellular responses, including inhibition of adenylate cyclase activity and both N-type and L-type calcium channels, activation of inward rectifying potassium channels, mitogen-activated protein kinase (MAPK), phospholipase C (PLC), phosphoinositide/protein kinase (PKC), phosphoinositide 3-kinase (PI3K) and regulation of NF-kappa-B. Also couples to adenylate cyclase stimulatory G alpha proteins. The selective temporal coupling to G-proteins and subsequent signaling can be regulated by RGSZ proteins, such as RGS9, RGS17 and RGS4. Phosphorylation by members of the GPRK subfamily of Ser/Thr protein kinases and association with beta-arrestins is involved in short-term receptor desensitization. Beta-arrestins associate with the GPRK-phosphorylated receptor and uncouple it from the G-protein thus terminating signal transduction. The phosphorylated receptor is internalized through endocytosis via clathrin-coated pits which involves beta-arrestins. The activation of the ERK pathway occurs either in a G-protein-dependent or a beta-arrestin-dependent manner and is regulated by agonist-specific receptor phosphorylation. Acts as a class A G-protein coupled receptor (GPCR) which dissociates from beta-arrestin at or near the plasma membrane and undergoes rapid recycling. Receptor down-regulation pathways are varying with the agonist and occur dependent or independent of G-protein coupling. Endogenous ligands induce rapid desensitization, endocytosis and recycling. Heterooligomerization with other GPCRs can modulate agonist binding, signaling and trafficking properties. Involved in neurogenesis. This chain is Mu-type opioid receptor (OPRM1), found in Cavia porcellus (Guinea pig).